A 217-amino-acid chain; its full sequence is tRNA (guanine-N(7)-)-methyltransferase (217 aa).

4 residues coordinate S-adenosyl-L-methionine: glutamate 44, aspartate 69, aspartate 96, and aspartate 118. The active site involves aspartate 118. Residue lysine 122 coordinates substrate. The interval arginine 124–arginine 129 is interaction with RNA. Residues aspartate 154 and threonine 193–glutamate 196 contribute to the substrate site.

The protein belongs to the class I-like SAM-binding methyltransferase superfamily. TrmB family.

The enzyme catalyses guanosine(46) in tRNA + S-adenosyl-L-methionine = N(7)-methylguanosine(46) in tRNA + S-adenosyl-L-homocysteine. It functions in the pathway tRNA modification; N(7)-methylguanine-tRNA biosynthesis. Its function is as follows. Catalyzes the formation of N(7)-methylguanine at position 46 (m7G46) in tRNA. This is tRNA (guanine-N(7)-)-methyltransferase from Lactococcus lactis subsp. lactis (strain IL1403) (Streptococcus lactis).